The following is a 587-amino-acid chain: Protein NDNF (587 aa).

Residues 1–24 (MQRSTMLPGVELLLLFLLSTSLHA) form the signal peptide. Residues Asn-109, Asn-129, Asn-190, Asn-321, Asn-334, Asn-459, Asn-498, and Asn-558 are each glycosylated (N-linked (GlcNAc...) asparagine).

As to quaternary structure, binds heparin. Interacts with dally; the interaction promotes dally degradation. Interacts with dpp and gbb.

The protein localises to the secreted. The protein resides in the extracellular space. Its subcellular location is the extracellular matrix. Secretory protein that acts as a feedback regulator of dpp/BMP, wg and hh signaling pathways. In the developing wing, is a dosage-dependent modulator of dpp/BMP signaling involved in wing growth and crossvein patterning; low levels promote and high levels inhibit dpp/BMP signaling. In the early pupal wing, inhibits dpp/BMP signaling activity to prevent the formation of ectopic crossveins in the posterior compartment. Binds to dpp and gbb to modulate their release and activity decreasing dpp/BMP signaling in the responding cells. During wing development regulates dpp/BMP coreceptor dally availability on the cell surface. Might have a role in testis development. This chain is Protein NDNF, found in Drosophila melanogaster (Fruit fly).